A 525-amino-acid polypeptide reads, in one-letter code: Peptide chain release factor 3 (525 aa).

Positions 9–276 (AKRRTFAIIS…GFTTYAPEPQ (268 aa)) constitute a tr-type G domain. Residues 18–25 (SHPDAGKT), 86–90 (DTPGH), and 140–143 (NKFD) each bind GTP.

This sequence belongs to the TRAFAC class translation factor GTPase superfamily. Classic translation factor GTPase family. PrfC subfamily.

It localises to the cytoplasm. In terms of biological role, increases the formation of ribosomal termination complexes and stimulates activities of RF-1 and RF-2. It binds guanine nucleotides and has strong preference for UGA stop codons. It may interact directly with the ribosome. The stimulation of RF-1 and RF-2 is significantly reduced by GTP and GDP, but not by GMP. This is Peptide chain release factor 3 from Francisella philomiragia subsp. philomiragia (strain ATCC 25017 / CCUG 19701 / FSC 153 / O#319-036).